The chain runs to 309 residues: Ribonuclease Z (309 aa).

His63, His65, Asp67, His68, His145, Asp216, and His274 together coordinate Zn(2+). Catalysis depends on Asp67, which acts as the Proton acceptor.

The protein belongs to the RNase Z family. In terms of assembly, homodimer. It depends on Zn(2+) as a cofactor.

The catalysed reaction is Endonucleolytic cleavage of RNA, removing extra 3' nucleotides from tRNA precursor, generating 3' termini of tRNAs. A 3'-hydroxy group is left at the tRNA terminus and a 5'-phosphoryl group is left at the trailer molecule.. In terms of biological role, zinc phosphodiesterase, which displays some tRNA 3'-processing endonuclease activity. Probably involved in tRNA maturation, by removing a 3'-trailer from precursor tRNA. The sequence is that of Ribonuclease Z from Streptococcus uberis (strain ATCC BAA-854 / 0140J).